A 222-amino-acid polypeptide reads, in one-letter code: N-(5'-phosphoribosyl)anthranilate isomerase (222 aa).

This sequence belongs to the TrpF family.

The enzyme catalyses N-(5-phospho-beta-D-ribosyl)anthranilate = 1-(2-carboxyphenylamino)-1-deoxy-D-ribulose 5-phosphate. It functions in the pathway amino-acid biosynthesis; L-tryptophan biosynthesis; L-tryptophan from chorismate: step 3/5. This chain is N-(5'-phosphoribosyl)anthranilate isomerase, found in Rhizobium johnstonii (strain DSM 114642 / LMG 32736 / 3841) (Rhizobium leguminosarum bv. viciae).